A 476-amino-acid chain; its full sequence is Bifunctional protein HldE (476 aa).

The interval 1 to 318 (MKPILPDYNN…AEAIHGSRDT (318 aa)) is ribokinase. 195 to 198 (NMSE) serves as a coordination point for ATP. Asp264 is an active-site residue. The tract at residues 344–476 (MTNGCFDILH…IIDAIKGGRG (133 aa)) is cytidylyltransferase.

This sequence in the N-terminal section; belongs to the carbohydrate kinase PfkB family. It in the C-terminal section; belongs to the cytidylyltransferase family. Homodimer.

The catalysed reaction is D-glycero-beta-D-manno-heptose 7-phosphate + ATP = D-glycero-beta-D-manno-heptose 1,7-bisphosphate + ADP + H(+). The enzyme catalyses D-glycero-beta-D-manno-heptose 1-phosphate + ATP + H(+) = ADP-D-glycero-beta-D-manno-heptose + diphosphate. Its pathway is nucleotide-sugar biosynthesis; ADP-L-glycero-beta-D-manno-heptose biosynthesis; ADP-L-glycero-beta-D-manno-heptose from D-glycero-beta-D-manno-heptose 7-phosphate: step 1/4. It participates in nucleotide-sugar biosynthesis; ADP-L-glycero-beta-D-manno-heptose biosynthesis; ADP-L-glycero-beta-D-manno-heptose from D-glycero-beta-D-manno-heptose 7-phosphate: step 3/4. It functions in the pathway bacterial outer membrane biogenesis; LPS core biosynthesis. Its function is as follows. Catalyzes the phosphorylation of D-glycero-D-manno-heptose 7-phosphate at the C-1 position to selectively form D-glycero-beta-D-manno-heptose-1,7-bisphosphate. Functionally, catalyzes the ADP transfer from ATP to D-glycero-beta-D-manno-heptose 1-phosphate, yielding ADP-D-glycero-beta-D-manno-heptose. The sequence is that of Bifunctional protein HldE from Vibrio vulnificus (strain CMCP6).